Reading from the N-terminus, the 310-residue chain is Thioredoxin reductase (310 aa).

34–41 (NGMQPGGQ) is an FAD binding site. Residues C135 and C138 are joined by a disulfide bond. 281-290 (DVQDKIYRQA) lines the FAD pocket.

The protein belongs to the class-II pyridine nucleotide-disulfide oxidoreductase family. Homodimer. Requires FAD as cofactor.

It localises to the cytoplasm. The enzyme catalyses [thioredoxin]-dithiol + NADP(+) = [thioredoxin]-disulfide + NADPH + H(+). The protein is Thioredoxin reductase (trxB) of Rickettsia prowazekii (strain Madrid E).